The following is a 443-amino-acid chain: Transcriptional adapter 2-alpha (443 aa).

Position 6 is a phosphoserine; in variant Ser-6 (proline 6). A ZZ-type zinc finger spans residues 12 to 69 (SDKPPCRGCSSYLMEPYIKCAECGPPPFFLCLQCFTRGFEYKKHQSDHTYEIMTSDFP). Cysteine 17, cysteine 20, cysteine 31, cysteine 34, cysteine 42, cysteine 45, histidine 55, and histidine 59 together coordinate Zn(2+). Residues 70-122 (VLDPSWTAQEEMALLEAVMDCGFGNWQDVANQMCTKTKEECEKHYMKHFINNP) enclose the SANT domain. Residues lysine 132 and lysine 138 each participate in a glycyl lysine isopeptide (Lys-Gly) (interchain with G-Cter in SUMO2) cross-link. The tract at residues 348–372 (SPSIPMASNSGRRSAPPLNLTGLPG) is disordered. The SWIRM domain occupies 356–443 (NSGRRSAPPL…LIREGYITKG (88 aa)). A DNA-binding region spans residues 426 to 435 (KTRKIYDFLI).

Interacts with GCN5 and NR3C1. Associated with the P/CAF protein in the PCAF complex. Component of the PCAF complex, at least composed of TADA2L/ADA2, TADA3L/ADA3, TAF5L/PAF65-beta, TAF6L/PAF65-alpha, TAF10/TAFII30, TAF12/TAFII20, TAF9/TAFII31 and TRRAP. Component of the ADA2A-containing complex (ATAC), composed of KAT14, KAT2A, TADA2L, TADA3L, ZZ3, MBIP, WDR5, YEATS2, CCDC101 and DR1. Interacts with CCDC134. In terms of tissue distribution, expressed in all tissues, but most abundantly in testis.

The protein resides in the nucleus. It is found in the chromosome. Functionally, component of the ATAC complex, a complex with histone acetyltransferase activity on histones H3 and H4. Required for the function of some acidic activation domains, which activate transcription from a distant site. Binds double-stranded DNA. Binds dinucleosomes, probably at the linker region between neighboring nucleosomes. Plays a role in chromatin remodeling. May promote TP53/p53 'Lys-321' acetylation, leading to reduced TP53 stability and transcriptional activity. May also promote XRCC6 acetylation thus facilitating cell apoptosis in response to DNA damage. The sequence is that of Transcriptional adapter 2-alpha (TADA2A) from Homo sapiens (Human).